Here is a 512-residue protein sequence, read N- to C-terminus: Metal transporter Nramp4 (512 aa).

Helical transmembrane passes span 52 to 72 (LWLF…PGNL), 80 to 100 (AIAG…GLLI), 129 to 149 (MVLW…EVIG), 161 to 181 (LVPL…FLFL), 189 to 209 (LEAV…WMFG), 235 to 255 (AVGI…SALV), 277 to 297 (IEST…TTVF), 323 to 343 (YGGG…AAGQ), 371 to 391 (ALIT…VFDS), 402 to 422 (WLNV…LCLV), 440 to 460 (ISWI…VDFF), and 468 to 488 (ILLV…LYLI).

Belongs to the NRAMP (TC 2.A.55) family. In terms of tissue distribution, expressed in vascular tissues.

The protein resides in the vacuole membrane. In terms of biological role, vacuolar metal transporter involved in intracellular metal homeostasis. Can transport iron (Fe), manganese (Mn) and cadmium (Cd). Regulates metal accumulation under Fe starvation. Acts redundantly with NRAMP3 to mobilize vacuolar Fe and provide sufficient Fe during seed germination. In association with NRAMP3, required for optimal growth and photosynthesis under Mn deficiency. Exports Mn from vacuoles in leaf mesophyll cells, making Mn available for functional photosystem II in chloroplasts. The chain is Metal transporter Nramp4 (NRAMP4) from Arabidopsis thaliana (Mouse-ear cress).